The primary structure comprises 315 residues: Probable diguanylate cyclase DgcF (315 aa).

4 helical membrane-spanning segments follow: residues 10–30, 41–61, 80–100, and 116–136; these read FSTGVLIVPCMLTLAIPGVLP, IALIVSVIASVVIGGAGSLAF, LLTFVTGAVEIVLVANSVIDI, and LGIATMAICPIMVSFSVAAIN. The region spanning 173–310 is the GGDEF domain; that stretch reads QHLTVMLLDI…GRNRTSTMRY (138 aa). D181 and I182 together coordinate Mg(2+). Substrate contacts are provided by N189, H194, and D198. E224 contributes to the Mg(2+) binding site.

As to quaternary structure, homodimer. Requires Mg(2+) as cofactor.

The protein localises to the cell membrane. It carries out the reaction 2 GTP = 3',3'-c-di-GMP + 2 diphosphate. It participates in purine metabolism; 3',5'-cyclic di-GMP biosynthesis. In terms of biological role, catalyzes the synthesis of cyclic-di-GMP (c-di-GMP) via the condensation of 2 GTP molecules. The polypeptide is Probable diguanylate cyclase DgcF (Escherichia coli (strain K12)).